Consider the following 461-residue polypeptide: UPF0210 protein Ddes_0622 (461 aa).

It belongs to the UPF0210 family. In terms of assembly, homodimer.

The sequence is that of UPF0210 protein Ddes_0622 from Desulfovibrio desulfuricans (strain ATCC 27774 / DSM 6949 / MB).